Reading from the N-terminus, the 262-residue chain is tRNA pseudouridine synthase A (262 aa).

Residue Asp51 is the Nucleophile of the active site. Substrate is bound at residue Tyr109.

It belongs to the tRNA pseudouridine synthase TruA family. Homodimer.

It catalyses the reaction uridine(38/39/40) in tRNA = pseudouridine(38/39/40) in tRNA. Functionally, formation of pseudouridine at positions 38, 39 and 40 in the anticodon stem and loop of transfer RNAs. In Aliivibrio salmonicida (strain LFI1238) (Vibrio salmonicida (strain LFI1238)), this protein is tRNA pseudouridine synthase A.